The following is a 20-amino-acid chain: Brevinin-1LT (20 aa).

Residues Cys-14 and Cys-20 are joined by a disulfide bond.

Expressed by the skin glands.

The protein localises to the secreted. Its function is as follows. Antimicrobial peptide. In Rana latastei (Italian agile frog), this protein is Brevinin-1LT.